The primary structure comprises 530 residues: Transcriptional regulator VasH (530 aa).

A Sigma-54 factor interaction domain is found at 193–422; sequence LIGESAAMQK…LKHLIEFGCA (230 aa). Residues 221-228 and 284-293 contribute to the ATP site; these read GETGTGKE and ANGGTLFLDE.

In terms of biological role, transcriptional regulator of the type VI secretion system. In Vibrio cholerae serotype O1 (strain ATCC 39315 / El Tor Inaba N16961), this protein is Transcriptional regulator VasH.